A 107-amino-acid polypeptide reads, in one-letter code: 4-carboxymethyl-4-methylbutenolide mutase (107 aa).

H26 acts as the Proton donor/acceptor in catalysis. 2 residues coordinate 3-methylmuconolactone: H26 and Y39. Residues H26 and Y39 each contribute to the 4-methylmuconolactone site.

It belongs to the MmlI family. As to quaternary structure, homodimer.

The catalysed reaction is 4-methylmuconolactone = 3-methylmuconolactone. With respect to regulation, inhibited by p-chloromercuribenzoate. Isomerase involved in the degradation of 4-methylsalicylate and 5-methylsalicylate. Catalyzes the isomerization of the dead-end metabolite 4-methylmuconolactone (4-ML) to 3-methylmuconolactone (3-ML), which can then be further degraded through a modified 3-oxoadipate pathway. Can also use 1-methylbislactone but not 3-methyl-cis,cis-muconate. In Pseudomonas reinekei, this protein is 4-carboxymethyl-4-methylbutenolide mutase.